The chain runs to 142 residues: Small ribosomal subunit protein uS9 (142 aa).

The protein belongs to the universal ribosomal protein uS9 family. As to quaternary structure, component of the small ribosomal subunit (SSU). Mature N.crassa ribosomes consist of a small (40S) and a large (60S) subunit. The 40S small subunit contains 1 molecule of ribosomal RNA (18S rRNA) and at least 32 different proteins. The large 60S subunit contains 3 rRNA molecules (26S, 5.8S and 5S rRNA) and at least 42 different proteins.

Its subcellular location is the cytoplasm. In terms of biological role, component of the ribosome, a large ribonucleoprotein complex responsible for the synthesis of proteins in the cell. The small ribosomal subunit (SSU) binds messenger RNAs (mRNAs) and translates the encoded message by selecting cognate aminoacyl-transfer RNA (tRNA) molecules. The large subunit (LSU) contains the ribosomal catalytic site termed the peptidyl transferase center (PTC), which catalyzes the formation of peptide bonds, thereby polymerizing the amino acids delivered by tRNAs into a polypeptide chain. The nascent polypeptides leave the ribosome through a tunnel in the LSU and interact with protein factors that function in enzymatic processing, targeting, and the membrane insertion of nascent chains at the exit of the ribosomal tunnel. The sequence is that of Small ribosomal subunit protein uS9 (rps-16) from Neurospora crassa (strain ATCC 24698 / 74-OR23-1A / CBS 708.71 / DSM 1257 / FGSC 987).